Reading from the N-terminus, the 90-residue chain is Conotoxin Mr22.1 (90 aa).

A signal peptide spans 1–18; sequence MMTRVFFAMFFLMALTEG. Residues 19–49 constitute a propeptide that is removed on maturation; sequence WPRLYDSDCVRGRNMHITCFKDQTCGLTVKR. 6'-bromotryptophan is present on W75.

This sequence belongs to the E superfamily. Post-translationally, contains 4 disulfide bonds. Expressed by the venom duct.

It localises to the secreted. The chain is Conotoxin Mr22.1 from Conus marmoreus (Marble cone).